The following is a 430-amino-acid chain: Adenylosuccinate synthetase (430 aa).

GTP is bound by residues 12–18 and 40–42; these read GDEGKGK and GHT. The active-site Proton acceptor is the Asp13. Residues Asp13 and Gly40 each contribute to the Mg(2+) site. Residues 13 to 16, 38 to 41, Thr129, Arg143, Gln224, Thr239, and Arg303 contribute to the IMP site; these read DEGK and NAGH. His41 acts as the Proton donor in catalysis. Residue 299–305 coordinates substrate; it reads TVSNRKR. GTP-binding positions include Arg305, 331-333, and 413-415; these read KLD and STG.

This sequence belongs to the adenylosuccinate synthetase family. Homodimer. It depends on Mg(2+) as a cofactor.

The protein localises to the cytoplasm. It catalyses the reaction IMP + L-aspartate + GTP = N(6)-(1,2-dicarboxyethyl)-AMP + GDP + phosphate + 2 H(+). It functions in the pathway purine metabolism; AMP biosynthesis via de novo pathway; AMP from IMP: step 1/2. In terms of biological role, plays an important role in the de novo pathway of purine nucleotide biosynthesis. Catalyzes the first committed step in the biosynthesis of AMP from IMP. This is Adenylosuccinate synthetase from Ehrlichia chaffeensis (strain ATCC CRL-10679 / Arkansas).